The chain runs to 275 residues: Ribosomal protein L11 methyltransferase (275 aa).

S-adenosyl-L-methionine is bound by residues T130, G151, D172, and N213.

The protein belongs to the methyltransferase superfamily. PrmA family.

Its subcellular location is the cytoplasm. It catalyses the reaction L-lysyl-[protein] + 3 S-adenosyl-L-methionine = N(6),N(6),N(6)-trimethyl-L-lysyl-[protein] + 3 S-adenosyl-L-homocysteine + 3 H(+). In terms of biological role, methylates ribosomal protein L11. The protein is Ribosomal protein L11 methyltransferase of Wolinella succinogenes (strain ATCC 29543 / DSM 1740 / CCUG 13145 / JCM 31913 / LMG 7466 / NCTC 11488 / FDC 602W) (Vibrio succinogenes).